The following is a 128-amino-acid chain: Ribonuclease P protein component (128 aa).

This sequence belongs to the RnpA family. In terms of assembly, consists of a catalytic RNA component (M1 or rnpB) and a protein subunit.

The enzyme catalyses Endonucleolytic cleavage of RNA, removing 5'-extranucleotides from tRNA precursor.. Functionally, RNaseP catalyzes the removal of the 5'-leader sequence from pre-tRNA to produce the mature 5'-terminus. It can also cleave other RNA substrates such as 4.5S RNA. The protein component plays an auxiliary but essential role in vivo by binding to the 5'-leader sequence and broadening the substrate specificity of the ribozyme. The chain is Ribonuclease P protein component from Methylococcus capsulatus (strain ATCC 33009 / NCIMB 11132 / Bath).